We begin with the raw amino-acid sequence, 341 residues long: 4-hydroxy-2-oxovalerate aldolase (341 aa).

The Pyruvate carboxyltransferase domain occupies 9–259 (VRITEVCLRD…KLDIDLYKMM (251 aa)). 17–18 (RD) contacts substrate. Asp-18 lines the Mn(2+) pocket. Residue His-21 is the Proton acceptor of the active site. Positions 171 and 198 each coordinate substrate. Positions 198 and 200 each coordinate Mn(2+). Tyr-289 is a binding site for substrate.

Belongs to the 4-hydroxy-2-oxovalerate aldolase family.

The enzyme catalyses (S)-4-hydroxy-2-oxopentanoate = acetaldehyde + pyruvate. This Bacillus cereus (strain 03BB102) protein is 4-hydroxy-2-oxovalerate aldolase (dmpG).